Here is a 640-residue protein sequence, read N- to C-terminus: Probable serine/threonine-protein kinase samkA (640 aa).

Residues 21–84 enclose the SAM domain; it reads WNNEKIIKWL…SEFEILKNNY (64 aa). The stretch at 73 to 100 forms a coiled coil; that stretch reads FKSEFEILKNNYDNNNNNNNNNNNNNNN. The interval 84–165 is disordered; the sequence is YDNNNNNNNN…INFNSNSNIT (82 aa). Positions 191 to 437 constitute a Protein kinase domain; sequence YEYVESISLG…SKDLQKLSWF (247 aa). Residues 197-205 and Lys-221 contribute to the ATP site; that span reads ISLGVFSVV. Asp-312 acts as the Proton acceptor in catalysis. Positions 448 to 482 are disordered; sequence QELTKSTTNTTTTTTTTTTPPPPPSPSSSSPSMNE. The segment covering 453–465 has biased composition (low complexity); sequence STTNTTTTTTTTT.

This sequence belongs to the protein kinase superfamily. Ser/Thr protein kinase family.

The catalysed reaction is L-seryl-[protein] + ATP = O-phospho-L-seryl-[protein] + ADP + H(+). It catalyses the reaction L-threonyl-[protein] + ATP = O-phospho-L-threonyl-[protein] + ADP + H(+). The sequence is that of Probable serine/threonine-protein kinase samkA (samkA) from Dictyostelium discoideum (Social amoeba).